We begin with the raw amino-acid sequence, 496 residues long: Lysine--tRNA ligase (496 aa).

Mg(2+)-binding residues include glutamate 409 and glutamate 416.

This sequence belongs to the class-II aminoacyl-tRNA synthetase family. In terms of assembly, homodimer. It depends on Mg(2+) as a cofactor.

It is found in the cytoplasm. It catalyses the reaction tRNA(Lys) + L-lysine + ATP = L-lysyl-tRNA(Lys) + AMP + diphosphate. The sequence is that of Lysine--tRNA ligase from Streptococcus pneumoniae (strain Hungary19A-6).